The following is a 1159-amino-acid chain: Syntaxin-binding protein 5-like (1159 aa).

A disordered region spans residues 1-37 (MKKFRKVLDGLTTSSPVNPGGSPGCGSAAGTPSAAPT). The segment covering 25 to 37 (CGSAAGTPSAAPT) has biased composition (low complexity). WD repeat units lie at residues 67 to 108 (TALA…CHSQ), 115 to 154 (VLQM…SLKF), 159 to 195 (ITFC…GYVI), 214 to 248 (HLSD…DFRI), 254 to 286 (IHSV…TAKP), 307 to 350 (PILK…KAIT), 358 to 392 (IVDF…VVDL), 414 to 491 (TCTA…YKLK), 519 to 628 (QMIS…ELVV), and 642 to 703 (TCLD…STSG). 2 disordered regions span residues 571–604 (SDTE…SVRD) and 690–770 (LTRS…KAQS). 2 stretches are compositionally biased toward polar residues: residues 699–713 (QSTS…NQVS) and 721–739 (SPTS…SQPC). WD repeat units follow at residues 808–865 (VTTL…TGTV), 874–946 (RFGF…QACL), 951–995 (ITES…LDVS), and 1009–1032 (CFTN…TYSQ). Residues 1094 to 1154 (GIEGMKAAAG…HELMLKCKDK (61 aa)) form the v-SNARE coiled-coil homology domain.

This sequence belongs to the WD repeat L(2)GL family.

The protein localises to the cytoplasm. Its subcellular location is the cell membrane. The protein resides in the membrane. Functionally, may play a role in vesicle trafficking and exocytosis. The chain is Syntaxin-binding protein 5-like (stxbp5l) from Danio rerio (Zebrafish).